Consider the following 456-residue polypeptide: UPF0210 protein Dde_3704 (456 aa).

The protein belongs to the UPF0210 family. As to quaternary structure, homodimer.

The polypeptide is UPF0210 protein Dde_3704 (Oleidesulfovibrio alaskensis (strain ATCC BAA-1058 / DSM 17464 / G20) (Desulfovibrio alaskensis)).